Here is a 183-residue protein sequence, read N- to C-terminus: Ribosome rescue factor SmrB (183 aa).

A Smr domain is found at 98-173 (LDLHGLTQKQ…GDAALLVLIE (76 aa)).

The protein belongs to the SmrB family. Associates with collided ribosomes, but not with correctly translating polysomes.

In terms of biological role, acts as a ribosome collision sensor. Detects stalled/collided disomes (pairs of ribosomes where the leading ribosome is stalled and a second ribosome has collided with it) and endonucleolytically cleaves mRNA at the 5' boundary of the stalled ribosome. Stalled/collided disomes form a new interface (primarily via the 30S subunits) that binds SmrB. Cleaved mRNA becomes available for tmRNA ligation, leading to ribosomal subunit dissociation and rescue of stalled ribosomes. The chain is Ribosome rescue factor SmrB from Erwinia tasmaniensis (strain DSM 17950 / CFBP 7177 / CIP 109463 / NCPPB 4357 / Et1/99).